The primary structure comprises 427 residues: Glutamate-1-semialdehyde 2,1-aminomutase (427 aa).

Lysine 265 is subject to N6-(pyridoxal phosphate)lysine.

Belongs to the class-III pyridoxal-phosphate-dependent aminotransferase family. HemL subfamily. In terms of assembly, homodimer. Pyridoxal 5'-phosphate serves as cofactor.

It localises to the cytoplasm. The catalysed reaction is (S)-4-amino-5-oxopentanoate = 5-aminolevulinate. Its pathway is porphyrin-containing compound metabolism; protoporphyrin-IX biosynthesis; 5-aminolevulinate from L-glutamyl-tRNA(Glu): step 2/2. The polypeptide is Glutamate-1-semialdehyde 2,1-aminomutase (Pseudomonas syringae pv. syringae (strain B728a)).